Consider the following 569-residue polypeptide: Potassium-transporting ATPase potassium-binding subunit (569 aa).

10 consecutive transmembrane segments (helical) span residues 3-23 (LMEY…SPVL), 68-88 (AASL…VLML), 136-156 (VGLA…AVAV), 179-199 (VLYV…GQGV), 259-279 (LQML…GGAV), 284-304 (HAWT…CSLY), 384-404 (GLYG…LMVG), 422-442 (AMLA…VAAV), 490-510 (IALA…GVAG), and 534-554 (LLLT…ALAL).

It belongs to the KdpA family. As to quaternary structure, the system is composed of three essential subunits: KdpA, KdpB and KdpC.

The protein localises to the cell inner membrane. Its function is as follows. Part of the high-affinity ATP-driven potassium transport (or Kdp) system, which catalyzes the hydrolysis of ATP coupled with the electrogenic transport of potassium into the cytoplasm. This subunit binds the periplasmic potassium ions and delivers the ions to the membrane domain of KdpB through an intramembrane tunnel. This chain is Potassium-transporting ATPase potassium-binding subunit, found in Nitratidesulfovibrio vulgaris (strain ATCC 29579 / DSM 644 / CCUG 34227 / NCIMB 8303 / VKM B-1760 / Hildenborough) (Desulfovibrio vulgaris).